A 120-amino-acid polypeptide reads, in one-letter code: Small ribosomal subunit protein uS12 (120 aa).

Position 88 is a 3-methylthioaspartic acid (Asp88).

Belongs to the universal ribosomal protein uS12 family. In terms of assembly, part of the 30S ribosomal subunit. Contacts proteins S8 and S17. May interact with IF1 in the 30S initiation complex.

Functionally, with S4 and S5 plays an important role in translational accuracy. Its function is as follows. Interacts with and stabilizes bases of the 16S rRNA that are involved in tRNA selection in the A site and with the mRNA backbone. Located at the interface of the 30S and 50S subunits, it traverses the body of the 30S subunit contacting proteins on the other side and probably holding the rRNA structure together. The combined cluster of proteins S8, S12 and S17 appears to hold together the shoulder and platform of the 30S subunit. This chain is Small ribosomal subunit protein uS12, found in Carsonella ruddii (strain PV).